The primary structure comprises 262 residues: Short-chain Z-isoprenyl diphosphate synthase (262 aa).

The active site involves aspartate 40. Residue aspartate 40 participates in Mg(2+) binding. Residues 41–44, tryptophan 45, and 86–88 each bind substrate; these read GNRR and STE. Asparagine 89 (proton acceptor) is an active-site residue. Substrate contacts are provided by residues arginine 92, arginine 211, and 217–219; that span reads RLS. Glutamate 230 contacts Mg(2+).

Belongs to the UPP synthase family. Z-FPP synthase subfamily. Requires Mg(2+) as cofactor.

It catalyses the reaction isopentenyl diphosphate + (2E)-geranyl diphosphate = (2Z,6E)-farnesyl diphosphate + diphosphate. It functions in the pathway phospholipid metabolism; decaprenyl phosphate biosynthesis. Functionally, generates Z-farnesyl diphosphate (Z-FPP) from isopentenyl pyrophosphate (IPP). Z-FPP is the precursor of decaprenyl diphosphate, which has a central role in the biosynthesis of the mycobacterial cell wall. The chain is Short-chain Z-isoprenyl diphosphate synthase from Mycobacterium bovis (strain ATCC BAA-935 / AF2122/97).